Consider the following 568-residue polypeptide: Zinc finger protein 76 (568 aa).

Lys-24 participates in a covalent cross-link: Glycyl lysine isopeptide (Lys-Gly) (interchain with G-Cter in SUMO2). Tandem repeats lie at residues 34 to 45 (IQLEDGTTAYIH), 62 to 73 (VQLEDGSMAYIH), and 88 to 99 (VQLEDGSTAYIH). The tract at residues 34 to 99 (IQLEDGTTAY…LEDGSTAYIH (66 aa)) is 3 X 12 AA approximate repeats. C2H2-type zinc fingers lie at residues 165 to 189 (FRCGYKGCGRLYTTAHHLKVHERAH), 195 to 219 (YRCDFPSCGKAFATGYGLKSHVRTH), 225 to 249 (YKCPEELCSKAFKTSGDLQKHVRTH), 255 to 279 (FRCPFEGCGRSFTTSNIRKVHVRTH), 285 to 309 (YTCPEPHCGRGFTSATNYKNHVRIH), 315 to 339 (YVCTVPGCGKRFTEYSSLYKHHVVH), and 345 to 368 (YTCSSCGKTYRQTSTLAMHKRSAH). The segment at 365–402 (RSAHGELEATEESEQALYEQQQLEAASAAEESPPPKPT) is disordered. The segment covering 379–395 (QALYEQQQLEAASAAEE) has biased composition (low complexity).

This sequence belongs to the krueppel C2H2-type zinc-finger protein family.

It is found in the nucleus. May be involved in transcriptional regulation. In Mus musculus (Mouse), this protein is Zinc finger protein 76 (Znf76).